Consider the following 76-residue polypeptide: UPF0248 protein MMP0286 (76 aa).

The protein belongs to the UPF0248 family.

The polypeptide is UPF0248 protein MMP0286 (Methanococcus maripaludis (strain DSM 14266 / JCM 13030 / NBRC 101832 / S2 / LL)).